We begin with the raw amino-acid sequence, 152 residues long: Protein X (152 aa).

Residues 68 to 115 (PCALRFTSATWRCMETPMNSVTCLRKRTLGLRTAPPTVMEQYIKDCLF) form a mitochondrial targeting sequence region.

The protein belongs to the orthohepadnavirus protein X family. In terms of assembly, may form homodimer. May interact with host CEBPA, CFLAR, CREB1, DDB1, E4F1, HBXIP, HSPD1/HSP60, NFKBIA, POLR2E and SMAD4. Interacts with host SMC5-SMC6 complex and induces its degradation. Interacts with host TRPC4AP; leading to prevent ubiquitination of TRPC4AP. Interacts with host PLSCR1; this interaction promotes ubiquitination and degradation of HBx and impairs HBx-mediated cell proliferation. Post-translationally, a fraction may be phosphorylated in insect cells and HepG2 cells, a human hepatoblastoma cell line. Phosphorylated in vitro by host protein kinase C or mitogen-activated protein kinase. N-acetylated in insect cells.

It localises to the host cytoplasm. Its subcellular location is the host nucleus. The protein resides in the host mitochondrion. Multifunctional protein that plays a role in silencing host antiviral defenses and promoting viral transcription. Does not seem to be essential for HBV infection. May be directly involved in development of cirrhosis and liver cancer (hepatocellular carcinoma). Most of cytosolic activities involve modulation of cytosolic calcium. The effect on apoptosis is controversial depending on the cell types in which the studies have been conducted. May induce apoptosis by localizing in mitochondria and causing loss of mitochondrial membrane potential. May also modulate apoptosis by binding host CFLAR, a key regulator of the death-inducing signaling complex (DISC). Promotes viral transcription by using the host E3 ubiquitin ligase DDB1 to target the SMC5-SMC6 complex to proteasomal degradation. This host complex would otherwise bind to viral episomal DNA, and prevents its transcription. Moderately stimulates transcription of many different viral and cellular transcription elements. Promoters and enhancers stimulated by HBx contain DNA binding sites for NF-kappa-B, AP-1, AP-2, c-EBP, ATF/CREB, or the calcium-activated factor NF-AT. The chain is Protein X from Lagothrix lagotricha (Brown woolly monkey).